A 91-amino-acid polypeptide reads, in one-letter code: Small ribosomal subunit protein uS15 (91 aa).

It belongs to the universal ribosomal protein uS15 family. Part of the 30S ribosomal subunit. Forms a bridge to the 50S subunit in the 70S ribosome, contacting the 23S rRNA.

One of the primary rRNA binding proteins, it binds directly to 16S rRNA where it helps nucleate assembly of the platform of the 30S subunit by binding and bridging several RNA helices of the 16S rRNA. Functionally, forms an intersubunit bridge (bridge B4) with the 23S rRNA of the 50S subunit in the ribosome. The protein is Small ribosomal subunit protein uS15 of Sulfurimonas denitrificans (strain ATCC 33889 / DSM 1251) (Thiomicrospira denitrificans (strain ATCC 33889 / DSM 1251)).